Reading from the N-terminus, the 106-residue chain is ATP-dependent Clp protease adapter protein ClpS (106 aa).

This sequence belongs to the ClpS family. As to quaternary structure, binds to the N-terminal domain of the chaperone ClpA.

Its function is as follows. Involved in the modulation of the specificity of the ClpAP-mediated ATP-dependent protein degradation. This chain is ATP-dependent Clp protease adapter protein ClpS, found in Nocardia farcinica (strain IFM 10152).